The chain runs to 72 residues: MREGIHPEYNHDVVVKCACGNTFTTGSTNKELKVEICSKCHPFFTGKQKIVDAGGRVDKFMKKFNLSNEDVK.

Positions 17, 19, 37, and 40 each coordinate Zn(2+).

The protein belongs to the bacterial ribosomal protein bL31 family. Type A subfamily. Part of the 50S ribosomal subunit. Zn(2+) is required as a cofactor.

Functionally, binds the 23S rRNA. The polypeptide is Large ribosomal subunit protein bL31 (Clostridium botulinum (strain ATCC 19397 / Type A)).